The primary structure comprises 123 residues: Succinate dehydrogenase assembly factor 3, mitochondrial (123 aa).

The N-terminal 31 residues, Met-1 to Leu-31, are a transit peptide targeting the mitochondrion.

This sequence belongs to the complex I LYR family. SDHAF3 subfamily. Interacts with sdhb within an sdha-sdhb subcomplex.

It is found in the mitochondrion matrix. Plays an essential role in the assembly of succinate dehydrogenase (SDH), an enzyme complex (also referred to as respiratory complex II) that is a component of both the tricarboxylic acid (TCA) cycle and the mitochondrial electron transport chain, and which couples the oxidation of succinate to fumarate with the reduction of ubiquinone (coenzyme Q) to ubiquinol. Promotes maturation of the iron-sulfur protein subunit sdhb of the SDH catalytic dimer, protecting it from the deleterious effects of oxidants. May act together with SDHAF1. The protein is Succinate dehydrogenase assembly factor 3, mitochondrial of Danio rerio (Zebrafish).